We begin with the raw amino-acid sequence, 366 residues long: Chorismate synthase (366 aa).

NADP(+) contacts are provided by arginine 48 and arginine 54. FMN is bound by residues 125 to 127 (RSS), 238 to 239 (NA), glycine 278, 293 to 297 (KPTSS), and arginine 319.

Belongs to the chorismate synthase family. Homotetramer. FMNH2 is required as a cofactor.

The catalysed reaction is 5-O-(1-carboxyvinyl)-3-phosphoshikimate = chorismate + phosphate. Its pathway is metabolic intermediate biosynthesis; chorismate biosynthesis; chorismate from D-erythrose 4-phosphate and phosphoenolpyruvate: step 7/7. Catalyzes the anti-1,4-elimination of the C-3 phosphate and the C-6 proR hydrogen from 5-enolpyruvylshikimate-3-phosphate (EPSP) to yield chorismate, which is the branch point compound that serves as the starting substrate for the three terminal pathways of aromatic amino acid biosynthesis. This reaction introduces a second double bond into the aromatic ring system. The sequence is that of Chorismate synthase from Neisseria meningitidis serogroup C / serotype 2a (strain ATCC 700532 / DSM 15464 / FAM18).